We begin with the raw amino-acid sequence, 239 residues long: Protein Thf1 (239 aa).

The stretch at 183–221 (ERVRKDLELYRSSLDRMKQARAVVEEMVKAARRQQERRQ) forms a coiled coil. Residues 211–221 (KAARRQQERRQ) show a composition bias toward basic and acidic residues. Residues 211-239 (KAARRQQERRQSAASLPETSLGDPSKPGS) form a disordered region.

The protein belongs to the THF1 family.

In terms of biological role, may be involved in photosynthetic membrane biogenesis. In Synechococcus sp. (strain JA-2-3B'a(2-13)) (Cyanobacteria bacterium Yellowstone B-Prime), this protein is Protein Thf1.